A 245-amino-acid chain; its full sequence is Ureidoacrylate amidohydrolase RutB (245 aa).

Asp-41 (proton acceptor) is an active-site residue. Residue Lys-150 is part of the active site. The Nucleophile role is filled by Cys-183.

The protein belongs to the isochorismatase family. RutB subfamily.

It carries out the reaction (Z)-3-ureidoacrylate + H2O + H(+) = (Z)-3-aminoacrylate + NH4(+) + CO2. It catalyses the reaction (Z)-3-ureidoacrylate + H2O = (Z)-3-aminoacrylate + carbamate + H(+). The enzyme catalyses (Z)-2-methylureidoacrylate + H2O + H(+) = (Z)-2-methylaminoacrylate + NH4(+) + CO2. Its function is as follows. Hydrolyzes ureidoacrylate to form aminoacrylate and carbamate. The carbamate hydrolyzes spontaneously, thereby releasing one of the nitrogen atoms of the pyrimidine ring as ammonia and one of its carbon atoms as CO2. This is Ureidoacrylate amidohydrolase RutB from Pseudomonas savastanoi pv. phaseolicola (strain 1448A / Race 6) (Pseudomonas syringae pv. phaseolicola (strain 1448A / Race 6)).